The following is a 127-amino-acid chain: Small ribosomal subunit protein uS12m (127 aa).

This sequence belongs to the universal ribosomal protein uS12 family.

It is found in the mitochondrion. This chain is Small ribosomal subunit protein uS12m (RPS12), found in Acanthamoeba castellanii (Amoeba).